A 183-amino-acid polypeptide reads, in one-letter code: NADH dehydrogenase [ubiquinone] 1 alpha subcomplex assembly factor 3 (183 aa).

It belongs to the NDUFAF3 family.

The protein localises to the nucleus. It is found in the mitochondrion inner membrane. Essential factor for the assembly of mitochondrial NADH:ubiquinone oxidoreductase complex (complex I). The protein is NADH dehydrogenase [ubiquinone] 1 alpha subcomplex assembly factor 3 (ndufaf3) of Xenopus tropicalis (Western clawed frog).